The chain runs to 202 residues: MEHLLSLLVRSVFIENMALAFFLGMCSFLAMSKKINAAIGLGIAVIVVQTVTVPANNLLLTYLLKEDALAWAGVTGVDLTFLSFISFIGVIAAIVQIMEMVMDKYMPALYNALGVFLPLITVNCVIMGGSLFMVERDYHFAESVVYGFGSGAGWAIAIVLLAGILEKMKYSDIPEGLRGLGITFITVGLMSLGFMSFGGISL.

Transmembrane regions (helical) follow at residues 11 to 31 (SVFI…FLAM), 35 to 55 (INAA…TVPA), 81 to 101 (FLSF…MEMV), 114 to 134 (GVFL…LFMV), 144 to 164 (VVYG…LAGI), and 180 to 200 (LGIT…FGGI).

Belongs to the NqrDE/RnfAE family. Composed of six subunits; NqrA, NqrB, NqrC, NqrD, NqrE and NqrF.

It localises to the cell inner membrane. It carries out the reaction a ubiquinone + n Na(+)(in) + NADH + H(+) = a ubiquinol + n Na(+)(out) + NAD(+). In terms of biological role, NQR complex catalyzes the reduction of ubiquinone-1 to ubiquinol by two successive reactions, coupled with the transport of Na(+) ions from the cytoplasm to the periplasm. NqrA to NqrE are probably involved in the second step, the conversion of ubisemiquinone to ubiquinol. This chain is Na(+)-translocating NADH-quinone reductase subunit E, found in Cellvibrio japonicus (strain Ueda107) (Pseudomonas fluorescens subsp. cellulosa).